The following is a 708-amino-acid chain: Homeobox-leucine zipper protein HDG10 (708 aa).

The tract at residues 1-24 is disordered; the sequence is MDSSHNDSSSDEEGIDSNNRRHHS. Residues 16–75 constitute a DNA-binding region (homeobox); that stretch reads DSNNRRHHSNHQVQRLEAFFHECPHPDDSQRRQLGNELNLKHKQIKFWFQNRRTQARIHN. Residues 119 to 141 adopt a coiled-coil conformation; the sequence is LCNLQKLRTKNVILKTEYERLSS. A disordered region spans residues 162 to 188; sequence GPSTYGSTSNNRPASYGSSSNHLPQQS. The span at 165 to 188 shows a compositional bias: polar residues; that stretch reads TYGSTSNNRPASYGSSSNHLPQQS. One can recognise an START domain in the interval 218 to 456; the sequence is SQLEKNRMFE…LQRMCERLSL (239 aa).

This sequence belongs to the HD-ZIP homeobox family. Class IV subfamily. In terms of assembly, interacts with ANT, BBM and AIL1. In terms of tissue distribution, expressed in exclusively in anthers with highest levels in the tapetum and pollen grains.

It localises to the nucleus. In terms of biological role, probable transcription factor. This chain is Homeobox-leucine zipper protein HDG10, found in Arabidopsis thaliana (Mouse-ear cress).